The primary structure comprises 139 residues: Ribulose bisphosphate carboxylase small subunit (139 aa).

It belongs to the RuBisCO small chain family. As to quaternary structure, heterohexadecamer of 8 large and 8 small subunits.

It localises to the plastid. The protein resides in the chloroplast. RuBisCO catalyzes two reactions: the carboxylation of D-ribulose 1,5-bisphosphate, the primary event in carbon dioxide fixation, as well as the oxidative fragmentation of the pentose substrate in the photorespiration process. Both reactions occur simultaneously and in competition at the same active site. Although the small subunit is not catalytic it is essential for maximal activity. This chain is Ribulose bisphosphate carboxylase small subunit, found in Ectocarpus siliculosus (Brown alga).